We begin with the raw amino-acid sequence, 415 residues long: Dynein assembly factor with WD repeat domains 1 (415 aa).

8 WD repeats span residues 90–129 (AHIL…ELHT), 132–172 (GHRN…CFYT), 175–214 (GHTA…EVST), 217–256 (GHFA…KVHV), 259–298 (GHRG…CLAT), 301–340 (GHND…CLCQ), 343–384 (GHKG…QVLE), and 385–415 (GHSD…RIWH).

The protein belongs to the WD repeat WDR69 family. In terms of tissue distribution, expressed in organs bearing motile cilia, including the pronephros, otic vesicles and Kupffer's vesicle.

It is found in the cytoplasm. The protein localises to the cytoskeleton. The protein resides in the flagellum basal body. It localises to the flagellum axoneme. Required for axonemal dynein assembly and ciliary motility in ciliated organs, including Kupffer's vesicle, during embryogenesis. Facilitates the onset of robust cilia motility during development. This Danio rerio (Zebrafish) protein is Dynein assembly factor with WD repeat domains 1 (daw1).